We begin with the raw amino-acid sequence, 518 residues long: 2-isopropylmalate synthase (518 aa).

A Pyruvate carboxyltransferase domain is found at 5–267; sequence VIIFDTTLRD…STKIKHKEIY (263 aa). 4 residues coordinate Mn(2+): Asp-14, His-202, His-204, and Asn-238. The interval 392–518 is regulatory domain; sequence SLSFFSVQSI…KLKKLKKINN (127 aa).

The protein belongs to the alpha-IPM synthase/homocitrate synthase family. LeuA type 1 subfamily. As to quaternary structure, homodimer. It depends on Mn(2+) as a cofactor.

It is found in the cytoplasm. It carries out the reaction 3-methyl-2-oxobutanoate + acetyl-CoA + H2O = (2S)-2-isopropylmalate + CoA + H(+). It participates in amino-acid biosynthesis; L-leucine biosynthesis; L-leucine from 3-methyl-2-oxobutanoate: step 1/4. Its function is as follows. Catalyzes the condensation of the acetyl group of acetyl-CoA with 3-methyl-2-oxobutanoate (2-ketoisovalerate) to form 3-carboxy-3-hydroxy-4-methylpentanoate (2-isopropylmalate). This is 2-isopropylmalate synthase from Buchnera aphidicola subsp. Rhopalosiphum padi.